A 327-amino-acid chain; its full sequence is 2-keto-3-deoxygluconate permease (327 aa).

10 helical membrane-spanning segments follow: residues 10 to 30 (IPGG…TFSP), 42 to 62 (GMIT…GASI), 73 to 93 (KSGT…AIAS), 95 to 115 (IIPE…LALV), 139 to 159 (AGAF…IILG), 163 to 183 (IASF…VGFA), 199 to 219 (VQTL…LTVI), 224 to 244 (LLGI…LIIA), 254 to 274 (TAGI…VLIA), and 289 to 309 (SLVA…TSIW).

Belongs to the KdgT transporter family.

The protein resides in the cell inner membrane. It catalyses the reaction 2-dehydro-3-deoxy-D-gluconate(in) + H(+)(in) = 2-dehydro-3-deoxy-D-gluconate(out) + H(+)(out). Catalyzes the proton-dependent uptake of 2-keto-3-deoxygluconate (KDG) into the cell. The chain is 2-keto-3-deoxygluconate permease from Escherichia coli O127:H6 (strain E2348/69 / EPEC).